The following is a 153-amino-acid chain: MDLILDDRQDKLEVSEELIEKIKDIIIECLDYEGYDDNYEVSLSFVDNKEIHELNREYRGVDRVTDVLSFPLLSDDFEDVELEEESLGDIVVSLERALEQSIEYNHSFEREVCFLICHSMFHLLGYDHDTDENTKEMREKEEHILNKLNITRE.

Residues His118, His122, and His128 each contribute to the Zn(2+) site.

This sequence belongs to the endoribonuclease YbeY family. Requires Zn(2+) as cofactor.

It localises to the cytoplasm. Its function is as follows. Single strand-specific metallo-endoribonuclease involved in late-stage 70S ribosome quality control and in maturation of the 3' terminus of the 16S rRNA. This chain is Endoribonuclease YbeY, found in Clostridioides difficile (strain 630) (Peptoclostridium difficile).